Here is a 1078-residue protein sequence, read N- to C-terminus: Zinc finger protein 827 (1078 aa).

Basic and acidic residues predominate over residues 1–10; the sequence is MPRRKQEQPK. A mediates direct interaction with RBBP4 region spans residues 1–14; sequence MPRRKQEQPKRLPS. The interval 1–76 is disordered; that stretch reads MPRRKQEQPK…PDTSLGSATP (76 aa). The short motif at 3-5 is the RRK motif; mediates NuRD recruitment to telomeres element; that stretch reads RRK. 2 stretches are compositionally biased toward polar residues: residues 33–42 and 62–76; these read YGNSSETPSE and EQSTSPDTSLGSATP. Residues Lys-175, Lys-215, and Lys-225 each participate in a glycyl lysine isopeptide (Lys-Gly) (interchain with G-Cter in SUMO2) cross-link. Positions 307 to 341 are disordered; it reads SLLPDDPLPLPSSEKKPEKVTPPPPPPPPTAQPPQ. Positions 326–338 are enriched in pro residues; the sequence is VTPPPPPPPPTAQ. Residues Lys-357 and Lys-369 each participate in a glycyl lysine isopeptide (Lys-Gly) (interchain with G-Cter in SUMO2) cross-link. 3 C2H2-type zinc fingers span residues 371-393, 399-421, and 430-452; these read FQCPICGLVIKRKSYWKRHMVIH, HQCPLCPFRCARKDNLKSHMKVH, and FQCQLCPFTSSRHFSLKLHMRCH. Residues Lys-463, Lys-472, Lys-520, Lys-546, Lys-577, Lys-584, and Lys-594 each participate in a glycyl lysine isopeptide (Lys-Gly) (interchain with G-Cter in SUMO2) cross-link. A disordered region spans residues 466–490; it reads IPDPDVKGSPHLSDSGCLGQQREGG. The disordered stretch occupies residues 594–640; sequence KEEPKEEESLSMPLPRSSYVFSPEPEVSTPSVSEDPLTPQEGKGSVL. Residues 613–627 show a composition bias toward low complexity; sequence VFSPEPEVSTPSVSE. Residues Lys-636 and Lys-655 each participate in a glycyl lysine isopeptide (Lys-Gly) (interchain with G-Cter in SUMO2) cross-link. Lys-670 participates in a covalent cross-link: Glycyl lysine isopeptide (Lys-Gly) (interchain with G-Cter in SUMO1); alternate. Lys-670 is covalently cross-linked (Glycyl lysine isopeptide (Lys-Gly) (interchain with G-Cter in SUMO2); alternate). Residues Lys-701, Lys-707, Lys-739, Lys-775, and Lys-795 each participate in a glycyl lysine isopeptide (Lys-Gly) (interchain with G-Cter in SUMO2) cross-link. C2H2-type zinc fingers lie at residues 814-836 and 842-864; these read FPCDVCGKVFGRQQTLSRHLSLH and YKCHLCPYAAKCRANLNQHLTVH. Glycyl lysine isopeptide (Lys-Gly) (interchain with G-Cter in SUMO2) cross-links involve residues Lys-867 and Lys-888. 2 consecutive C2H2-type zinc fingers follow at residues 894 to 916 and 926 to 949; these read YSCHVCGFETELNVQFVSHMSLH and ICCTACDFVTMEEAEIKTHIGTKH. Basic and acidic residues predominate over residues 945–957; that stretch reads IGTKHTGDDRKTP. The tract at residues 945 to 990 is disordered; that stretch reads IGTKHTGDDRKTPSESNSPSSSSLSTLSDSANGKDDSDSSQKNKGG. Lys-955 participates in a covalent cross-link: Glycyl lysine isopeptide (Lys-Gly) (interchain with G-Cter in SUMO2). Over residues 958–974 the composition is skewed to low complexity; that stretch reads SESNSPSSSSLSTLSDS. Residues 976–985 show a composition bias toward basic and acidic residues; the sequence is NGKDDSDSSQ. A Glycyl lysine isopeptide (Lys-Gly) (interchain with G-Cter in SUMO2) cross-link involves residue Lys-1011. 2 consecutive C2H2-type zinc fingers follow at residues 1016–1038 and 1044–1066; these read FECVFCNFVCKTKNMFERHLQIH and FECDVCHKFMKTPEQLLEHKKCH.

This sequence belongs to the krueppel C2H2-type zinc-finger protein family. In terms of assembly, part of a transcription inhibitory ribonucleoprotein complex composed at least of the circular RNA circZNF827, HNRNPK and HNRNPL. Interacts with the nucleosome remodeling and histone deacetylase/NuRD complex. Interacts with RBBP4; the interaction is direct and recruits RBBP4, a component of the NuRD complex, to telomeres.

The protein localises to the nucleus. The protein resides in the chromosome. Its subcellular location is the telomere. Its function is as follows. As part of a ribonucleoprotein complex composed at least of HNRNPK, HNRNPL and the circular RNA circZNF827 that nucleates the complex on chromatin, may negatively regulate the transcription of genes involved in neuronal differentiation. Could also recruit the nucleosome remodeling and histone deacetylase/NuRD complex to telomeric regions of chromosomes to regulate chromatin remodeling as part of telomere maintenance. The polypeptide is Zinc finger protein 827 (Znf827) (Mus musculus (Mouse)).